We begin with the raw amino-acid sequence, 314 residues long: Ribonuclease Z (314 aa).

His-61, His-63, Asp-65, His-66, His-139, Asp-211, and His-269 together coordinate Zn(2+). Asp-65 acts as the Proton acceptor in catalysis.

This sequence belongs to the RNase Z family. In terms of assembly, homodimer. It depends on Zn(2+) as a cofactor.

The catalysed reaction is Endonucleolytic cleavage of RNA, removing extra 3' nucleotides from tRNA precursor, generating 3' termini of tRNAs. A 3'-hydroxy group is left at the tRNA terminus and a 5'-phosphoryl group is left at the trailer molecule.. Functionally, zinc phosphodiesterase, which displays some tRNA 3'-processing endonuclease activity. Probably involved in tRNA maturation, by removing a 3'-trailer from precursor tRNA. The chain is Ribonuclease Z from Gemmatimonas aurantiaca (strain DSM 14586 / JCM 11422 / NBRC 100505 / T-27).